Here is a 166-residue protein sequence, read N- to C-terminus: HTH-type transcriptional regulator PecS (166 aa).

The region spanning 25–160 (PMLVIGTLSR…LRALLGRVEK (136 aa)) is the HTH marR-type domain.

It is found in the cytoplasm. With respect to regulation, the presence of PecM is required to ensure the full regulation of the pecS-pecM intergenic region by PecS. In terms of biological role, negatively regulates the expression of genes encoding pectinase and cellulase, which play a major role in virulence, and the expression of the blue pigment indigoidine, which is implicated in pathogenicity and protection from oxidative stress. Represses the expression of genes involved in indigoidine biosynthesis by binding to indA and indC promoter regions. Also binds to promoter sites in the pecS-pecM intergenic region and negatively autoregulates its expression as well as that of pecM. The polypeptide is HTH-type transcriptional regulator PecS (Dickeya dadantii (strain 3937) (Erwinia chrysanthemi (strain 3937))).